Here is a 238-residue protein sequence, read N- to C-terminus: Ribosomal RNA small subunit methyltransferase G (238 aa).

Residues Gly-77, Phe-82, 128-129 (AE), and Arg-147 each bind S-adenosyl-L-methionine.

It belongs to the methyltransferase superfamily. RNA methyltransferase RsmG family.

The protein localises to the cytoplasm. Specifically methylates the N7 position of guanine in position 535 of 16S rRNA. In Brevibacillus brevis (strain 47 / JCM 6285 / NBRC 100599), this protein is Ribosomal RNA small subunit methyltransferase G.